The following is a 435-amino-acid chain: Methylenetetrahydrofolate--tRNA-(uracil-5-)-methyltransferase TrmFO (435 aa).

An FAD-binding site is contributed by 9 to 14 (GAGLAG).

It belongs to the MnmG family. TrmFO subfamily. FAD serves as cofactor.

It localises to the cytoplasm. The enzyme catalyses uridine(54) in tRNA + (6R)-5,10-methylene-5,6,7,8-tetrahydrofolate + NADH + H(+) = 5-methyluridine(54) in tRNA + (6S)-5,6,7,8-tetrahydrofolate + NAD(+). It carries out the reaction uridine(54) in tRNA + (6R)-5,10-methylene-5,6,7,8-tetrahydrofolate + NADPH + H(+) = 5-methyluridine(54) in tRNA + (6S)-5,6,7,8-tetrahydrofolate + NADP(+). Its function is as follows. Catalyzes the folate-dependent formation of 5-methyl-uridine at position 54 (M-5-U54) in all tRNAs. In Staphylococcus aureus (strain Newman), this protein is Methylenetetrahydrofolate--tRNA-(uracil-5-)-methyltransferase TrmFO.